Consider the following 357-residue polypeptide: BLOC-1-related complex subunit 6 (357 aa).

The segment at 20 to 196 is disordered; the sequence is HQALVFGGGP…SGAGGGRRAT (177 aa). Residues 90–99 show a composition bias toward low complexity; it reads GAGSRRGAPG. The segment covering 138 to 149 has biased composition (acidic residues); the sequence is EQQEEEDNDEEA. The span at 150-162 shows a compositional bias: low complexity; it reads AAGSRAGRSFSSR. Ser-168 bears the Phosphoserine mark. Thr-196 carries the post-translational modification Phosphothreonine. Ser-199 bears the Phosphoserine mark. The segment at 227–256 is disordered; sequence LSGAPPPPPSAPARPCPAPAPTPTPAIPPI. Over residues 230-256 the composition is skewed to pro residues; it reads APPPPPSAPARPCPAPAPTPTPAIPPI.

It belongs to the BORCS6 family. Component of the BLOC-one-related complex (BORC) which is composed of BLOC1S1, BLOC1S2, BORCS5, BORCS6, BORCS7, BORCS8, KXD1 and SNAPIN.

Its subcellular location is the lysosome membrane. Its function is as follows. As part of the BORC complex may play a role in lysosomes movement and localization at the cell periphery. Associated with the cytosolic face of lysosomes, the BORC complex may recruit ARL8B and couple lysosomes to microtubule plus-end-directed kinesin motor. The chain is BLOC-1-related complex subunit 6 from Homo sapiens (Human).